The following is a 247-amino-acid chain: Cell division protein ZapD (247 aa).

Belongs to the ZapD family. In terms of assembly, interacts with FtsZ.

The protein resides in the cytoplasm. Its function is as follows. Cell division factor that enhances FtsZ-ring assembly. Directly interacts with FtsZ and promotes bundling of FtsZ protofilaments, with a reduction in FtsZ GTPase activity. The sequence is that of Cell division protein ZapD from Shigella boydii serotype 4 (strain Sb227).